We begin with the raw amino-acid sequence, 1079 residues long: Intraflagellar transport protein 80 (1079 aa).

Residues 495–514 (GDMIRPSTVQNQPSTQGLPN) form a disordered region. The span at 501 to 514 (STVQNQPSTQGLPN) shows a compositional bias: polar residues.

It localises to the cell projection. The protein resides in the cilium. It is found in the flagellum. The protein localises to the cytoplasm. Its subcellular location is the cytoskeleton. It localises to the flagellum axoneme. The protein resides in the flagellum basal body. In terms of biological role, component of the intraflagellar transport complex B (IFT-B) involved in flagellar assembly. This is Intraflagellar transport protein 80 from Giardia intestinalis (strain ATCC 50803 / WB clone C6) (Giardia lamblia).